We begin with the raw amino-acid sequence, 553 residues long: Cytokine-like nuclear factor N-PAC (553 aa).

The PWWP domain maps to 8–66; that stretch reads LGDLVWGKLGRYPPWPGKIVNPPKDLKKPRGKKCFFVKFFGTEDHAWIKVEQLKPYHLH. 2 stretches are compositionally biased toward basic and acidic residues: residues 92 to 145 and 162 to 182; these read KTKG…EGKK and RAQD…KDLT. The interval 92–188 is disordered; it reads KTKGKDQASS…KDLTIPESST (97 aa). The a.T hook DNA-binding region spans 168 to 180; sequence PRKRGRPPKDEKD. The tract at residues 214–217 is interaction with histone H3; the sequence is DPHF. The dehydrogenase domain stretch occupies residues 261–553; it reads GSITPTDKKI…MSAVYRAYIH (293 aa). NAD(+)-binding positions include 271-285, threonine 362, and lysine 505; that span reads GFLG…IVSN.

Belongs to the HIBADH-related family. NP60 subfamily. In terms of assembly, homotetramere. Binds to mononucleosomes.

It is found in the nucleus. The protein localises to the chromosome. In terms of biological role, cytokine-like nuclear factor with chromatin gene reader activity involved in chromatin modification and regulation of gene expression. Acts as a nucleosome-destabilizing factor that is recruited to genes during transcriptional activation. Recognizes and binds histone H3 without a preference for specific epigenetic markers and also binds DNA. Interacts with KDM1B and promotes its histone demethylase activity by facilitating the capture of H3 tails, they form a multifunctional enzyme complex that modifies transcribed chromatin and facilitates Pol II transcription through nucleosomes. This is Cytokine-like nuclear factor N-PAC (GLYR1) from Gallus gallus (Chicken).